Here is a 696-residue protein sequence, read N- to C-terminus: Elongation factor G (696 aa).

The tr-type G domain maps to 8–282 (DRTRNIGIMA…AVIDYLPSPL (275 aa)). Residues 17-24 (AHIDAGKT), 81-85 (DTPGH), and 135-138 (NKMD) contribute to the GTP site.

Belongs to the TRAFAC class translation factor GTPase superfamily. Classic translation factor GTPase family. EF-G/EF-2 subfamily.

The protein resides in the cytoplasm. Functionally, catalyzes the GTP-dependent ribosomal translocation step during translation elongation. During this step, the ribosome changes from the pre-translocational (PRE) to the post-translocational (POST) state as the newly formed A-site-bound peptidyl-tRNA and P-site-bound deacylated tRNA move to the P and E sites, respectively. Catalyzes the coordinated movement of the two tRNA molecules, the mRNA and conformational changes in the ribosome. This is Elongation factor G from Staphylococcus saprophyticus subsp. saprophyticus (strain ATCC 15305 / DSM 20229 / NCIMB 8711 / NCTC 7292 / S-41).